The chain runs to 125 residues: Egg cell-secreted protein 1.2 (125 aa).

The first 22 residues, 1 to 22 (MASNTSFLFATIAILLVLNISG), serve as a signal peptide directing secretion.

The protein belongs to the plant egg cell-secreted peptide family. Restricted to female reproductive tissues, specifically accumulating in storage vesicles of the unfertilized egg cell.

It localises to the cytoplasmic vesicle. The protein resides in the secreted. Involved in the regulation of gamete interactions during the double fertilization and to prevent multiple-pollen tube attraction; mediates the redistribution of the gamete fusogen HAP2/GCS1 to the cell surface after secretion upon sperm arrival. This is Egg cell-secreted protein 1.2 (EC1.2) from Arabidopsis thaliana (Mouse-ear cress).